Consider the following 313-residue polypeptide: MSVIEQNSVEYPPLIVSEAGVSDYIALLKPRVMSLVVFTALVGLVIAPVHLHPVLAATSILCIAVGGGAAGALNMWYESDIDALMTRTANRPIPRGRVSSPEAAAFGITLAIFSVATLGVLVNWLAGALLAFTIFFYAVVYTMWLKRWTAQNIVIGGAAGALPPVVAWAAATGSLAPQPIILFLIIFLWTPPHFWALALFRSDDYARAKVPMLPVVAGPDATRLQILLYTIVLVTVAILPWPLGYFGAAYGLTSVALGAGMLWFAFNVYRYRTGTQANRAARALFKFSLLYLFLLFAVLPLEVAAHAVAAMIW.

9 helical membrane-spanning segments follow: residues 35–55 (LVVF…HPVL), 56–76 (AATS…LNMW), 98–118 (VSSP…VATL), 120–140 (VLVN…YAVV), 153–173 (IVIG…AATG), 180–200 (IILF…LALF), 226–246 (ILLY…LGYF), 248–268 (AAYG…AFNV), and 292–312 (LFLL…AAMI).

It belongs to the UbiA prenyltransferase family. Protoheme IX farnesyltransferase subfamily.

Its subcellular location is the cell inner membrane. It catalyses the reaction heme b + (2E,6E)-farnesyl diphosphate + H2O = Fe(II)-heme o + diphosphate. It functions in the pathway porphyrin-containing compound metabolism; heme O biosynthesis; heme O from protoheme: step 1/1. Its function is as follows. Converts heme B (protoheme IX) to heme O by substitution of the vinyl group on carbon 2 of heme B porphyrin ring with a hydroxyethyl farnesyl side group. The protein is Protoheme IX farnesyltransferase of Afipia carboxidovorans (strain ATCC 49405 / DSM 1227 / KCTC 32145 / OM5) (Oligotropha carboxidovorans).